Reading from the N-terminus, the 350-residue chain is Twinfilin-1 (350 aa).

ADF-H domains follow at residues 4-139 (QTGI…KYLA) and 177-313 (GIAF…EEVH). A disordered region spans residues 316 to 350 (QHAHKQNFAKPKGPAGKRGIRRLIRGPAEAETAND).

Belongs to the actin-binding proteins ADF family. Twinfilin subfamily. In terms of assembly, interacts with G-actin; ADP-actin form.

It localises to the cytoplasm. The protein localises to the cytoskeleton. Functionally, actin-binding protein involved in motile and morphological processes. Inhibits actin polymerization, likely by sequestering G-actin. The polypeptide is Twinfilin-1 (twf1) (Xenopus tropicalis (Western clawed frog)).